The primary structure comprises 189 residues: Elongation factor P (189 aa).

An N6-(3,6-diaminohexanoyl)-5-hydroxylysine modification is found at Lys-34.

It belongs to the elongation factor P family. In terms of processing, may be beta-lysylated on the epsilon-amino group of Lys-34 by the combined action of EpmA and EpmB, and then hydroxylated on the C5 position of the same residue by EpmC (if this protein is present). Lysylation is critical for the stimulatory effect of EF-P on peptide-bond formation. The lysylation moiety may extend toward the peptidyltransferase center and stabilize the terminal 3-CCA end of the tRNA. Hydroxylation of the C5 position on Lys-34 may allow additional potential stabilizing hydrogen-bond interactions with the P-tRNA.

The protein resides in the cytoplasm. It functions in the pathway protein biosynthesis; polypeptide chain elongation. Functionally, involved in peptide bond synthesis. Alleviates ribosome stalling that occurs when 3 or more consecutive Pro residues or the sequence PPG is present in a protein, possibly by augmenting the peptidyl transferase activity of the ribosome. Modification of Lys-34 is required for alleviation. The chain is Elongation factor P from Alkalilimnicola ehrlichii (strain ATCC BAA-1101 / DSM 17681 / MLHE-1).